The following is a 399-amino-acid chain: Argininosuccinate synthase (399 aa).

9-17 is a binding site for ATP; the sequence is AYSGGLDTS. Tyrosine 85 contacts L-citrulline. Glycine 115 lines the ATP pocket. L-aspartate-binding residues include threonine 117, asparagine 121, and aspartate 122. Asparagine 121 is an L-citrulline binding site. Residues arginine 125, serine 173, glutamate 258, and tyrosine 270 each coordinate L-citrulline.

The protein belongs to the argininosuccinate synthase family. Type 1 subfamily. Homotetramer.

Its subcellular location is the cytoplasm. The catalysed reaction is L-citrulline + L-aspartate + ATP = 2-(N(omega)-L-arginino)succinate + AMP + diphosphate + H(+). Its pathway is amino-acid biosynthesis; L-arginine biosynthesis; L-arginine from L-ornithine and carbamoyl phosphate: step 2/3. This chain is Argininosuccinate synthase, found in Streptococcus thermophilus (strain CNRZ 1066).